The following is a 209-amino-acid chain: Ribosomal RNA large subunit methyltransferase E (209 aa).

Gly-63, Trp-65, Asp-83, Asp-99, and Asp-124 together coordinate S-adenosyl-L-methionine. Lys-164 serves as the catalytic Proton acceptor.

The protein belongs to the class I-like SAM-binding methyltransferase superfamily. RNA methyltransferase RlmE family.

Its subcellular location is the cytoplasm. The enzyme catalyses uridine(2552) in 23S rRNA + S-adenosyl-L-methionine = 2'-O-methyluridine(2552) in 23S rRNA + S-adenosyl-L-homocysteine + H(+). Its function is as follows. Specifically methylates the uridine in position 2552 of 23S rRNA at the 2'-O position of the ribose in the fully assembled 50S ribosomal subunit. The protein is Ribosomal RNA large subunit methyltransferase E of Shewanella amazonensis (strain ATCC BAA-1098 / SB2B).